The primary structure comprises 398 residues: Selenide, water dikinase (398 aa).

Positions 1–21 (MSHKRPQSSAGESNGAVDLKT) are disordered. C46 is an active-site residue. ATP contacts are provided by residues K49, 72-74 (GMD), D97, D120, and 171-174 (GGQT). D74 contacts Mg(2+). A Mg(2+)-binding site is contributed by D120. D278 provides a ligand contact to Mg(2+).

This sequence belongs to the selenophosphate synthase 1 family. Class I subfamily. Homodimer. Requires Mg(2+) as cofactor.

It carries out the reaction hydrogenselenide + ATP + H2O = selenophosphate + AMP + phosphate + 2 H(+). In terms of biological role, synthesizes selenophosphate from selenide and ATP. The protein is Selenide, water dikinase of Leishmania major.